The chain runs to 353 residues: MQTPQIIWSLIAPQYRGLANKVNRKLIQSSIKHYFWYCKQFDKLVHPFYYLTAKKHTPLFNQQLVDLAQSTLYFYNLSVFVDKSNAGQIIKNVTGSVEPNQITVIFGPSGSGKTTLIKQLGLVENPTCGFLNCGNFYYFANQKHNRATKQFQNSIGYVLQKAEEQFLCDSVLEEVLTGAINLGLCQKGDVNFAKKYLEMCGLHHIPLIKNPLELSGGQKKRLALASVLAMQVQFLILDEPTVGLDQEGKALKSALLKQLKQVTRIMIVSHDVDFIYETADSLIQLEAGQIVDQMSVADFFNNMQLLQRYEITPPLVVQTIQLLQAKGVQLNDPLAIKTVHDLIDQLKPLFHDQ.

Positions 72 to 312 (LYFYNLSVFV…MQLLQRYEIT (241 aa)) constitute an ABC transporter domain. 107–114 (GPSGSGKT) contributes to the ATP binding site.

This sequence belongs to the ABC transporter superfamily.

This chain is Putative ABC transporter ATP-binding protein MG303 homolog, found in Mycoplasma pneumoniae (strain ATCC 29342 / M129 / Subtype 1) (Mycoplasmoides pneumoniae).